The primary structure comprises 277 residues: Diaminopimelate epimerase (277 aa).

Residues Asn-13, Gln-46, and Asn-66 each contribute to the substrate site. Cys-75 acts as the Proton donor in catalysis. Residues 76–77 (GN), Asn-159, Asn-192, and 210–211 (ER) contribute to the substrate site. Cys-219 serves as the catalytic Proton acceptor. 220 to 221 (GT) contacts substrate.

It belongs to the diaminopimelate epimerase family. Homodimer.

The protein resides in the cytoplasm. The enzyme catalyses (2S,6S)-2,6-diaminopimelate = meso-2,6-diaminopimelate. Its pathway is amino-acid biosynthesis; L-lysine biosynthesis via DAP pathway; DL-2,6-diaminopimelate from LL-2,6-diaminopimelate: step 1/1. Functionally, catalyzes the stereoinversion of LL-2,6-diaminopimelate (L,L-DAP) to meso-diaminopimelate (meso-DAP), a precursor of L-lysine and an essential component of the bacterial peptidoglycan. The polypeptide is Diaminopimelate epimerase (Aromatoleum aromaticum (strain DSM 19018 / LMG 30748 / EbN1) (Azoarcus sp. (strain EbN1))).